A 288-amino-acid chain; its full sequence is Polyamine aminopropyltransferase (288 aa).

The PABS domain occupies 9-238; sequence ETLHDQFGQY…GIMTFAWATD (230 aa). S-methyl-5'-thioadenosine is bound at residue Gln33. Spermidine is bound by residues His64 and Asp88. S-methyl-5'-thioadenosine-binding positions include Glu108 and 140-141; that span reads DG. Residue Asp158 is the Proton acceptor of the active site. 158-161 provides a ligand contact to spermidine; it reads DCTD. Pro165 contributes to the S-methyl-5'-thioadenosine binding site.

Belongs to the spermidine/spermine synthase family. As to quaternary structure, homodimer or homotetramer.

The protein resides in the cytoplasm. The enzyme catalyses S-adenosyl 3-(methylsulfanyl)propylamine + putrescine = S-methyl-5'-thioadenosine + spermidine + H(+). It functions in the pathway amine and polyamine biosynthesis; spermidine biosynthesis; spermidine from putrescine: step 1/1. In terms of biological role, catalyzes the irreversible transfer of a propylamine group from the amino donor S-adenosylmethioninamine (decarboxy-AdoMet) to putrescine (1,4-diaminobutane) to yield spermidine. This chain is Polyamine aminopropyltransferase, found in Escherichia coli O17:K52:H18 (strain UMN026 / ExPEC).